The chain runs to 112 residues: Omega-agatoxin-1A (112 aa).

An N-terminal signal peptide occupies residues methionine 1–alanine 19. A propeptide spanning residues valine 20–arginine 36 is cleaved from the precursor. Residues arginine 103–arginine 109 constitute a propeptide, glu-rich.

Belongs to the neurotoxin 04 (omega-agtx) family. 01 (type I omega-agtx) subfamily. As to quaternary structure, heterodimer of two subunits, a major chain and a minor chain, linked by a disulfide bond. Proteolytically processed to yield the major and the minor chains. As to expression, expressed by the venom gland.

The protein resides in the secreted. In terms of biological role, omega-agatoxins are antagonists of voltage-gated calcium channels. They block insect neuromuscular transmission presynaptically. This toxin is a blocker of L-type calcium channels (Cav/CACNA1). In Agelenopsis aperta (North American funnel-web spider), this protein is Omega-agatoxin-1A.